The sequence spans 552 residues: Probable malate:quinone oxidoreductase (552 aa).

The interval 530–552 (DAKPATPEAKPAQASSPQHDMAL) is disordered. Over residues 542–552 (QASSPQHDMAL) the composition is skewed to polar residues.

It belongs to the MQO family. FAD is required as a cofactor.

It catalyses the reaction (S)-malate + a quinone = a quinol + oxaloacetate. It participates in carbohydrate metabolism; tricarboxylic acid cycle; oxaloacetate from (S)-malate (quinone route): step 1/1. The protein is Probable malate:quinone oxidoreductase of Cronobacter sakazakii (strain ATCC BAA-894) (Enterobacter sakazakii).